A 165-amino-acid chain; its full sequence is Endoribonuclease YbeY (165 aa).

Residues His-130, His-134, and His-140 each coordinate Zn(2+).

Belongs to the endoribonuclease YbeY family. It depends on Zn(2+) as a cofactor.

It is found in the cytoplasm. Single strand-specific metallo-endoribonuclease involved in late-stage 70S ribosome quality control and in maturation of the 3' terminus of the 16S rRNA. The polypeptide is Endoribonuclease YbeY (Streptococcus pneumoniae serotype 4 (strain ATCC BAA-334 / TIGR4)).